The chain runs to 471 residues: Heparan-sulfate 6-O-sulfotransferase 3 (471 aa).

Residues 1 to 4 (MDER) lie on the Cytoplasmic side of the membrane. A helical; Signal-anchor for type II membrane protein transmembrane segment spans residues 5-27 (FNKWLLTPVLTLLFVVIMYQYVS). Residues 28-471 (PSCTSSCTNF…EDYNSQVVRW (444 aa)) lie on the Lumenal side of the membrane. The tract at residues 39–122 (EQPRAGEAGP…EAPENGSLPR (84 aa)) is disordered. Residues 41-62 (PRAGEAGPPAVPGPARRAQAPP) show a composition bias toward low complexity. A compositionally biased stretch (pro residues) spans 70 to 81 (QLPPPPRGPPEG). Residues 88–114 (PEEEDEEPGDPREGEEEEEEDEPDPEA) are compositionally biased toward acidic residues. 2 N-linked (GlcNAc...) asparagine glycosylation sites follow: Asn117 and Asn128. 152-160 (HIQKTGGTT) serves as a coordination point for 3'-phosphoadenylyl sulfate. Substrate-binding positions include 182–183 (KK), Arg199, Trp204, and His209. The active-site Proton acceptor is the His209. The N-linked (GlcNAc...) asparagine glycan is linked to Asn231. Positions 245 and 253 each coordinate 3'-phosphoadenylyl sulfate. Substrate-binding residues include His257 and Trp264. 2 N-linked (GlcNAc...) asparagine glycosylation sites follow: Asn324 and Asn329. Residue 377–379 (TQF) coordinates 3'-phosphoadenylyl sulfate. The N-linked (GlcNAc...) asparagine glycan is linked to Asn380. 383-384 (RA) contacts 3'-phosphoadenylyl sulfate. Residues 422–471 (TKQLEHQRDRQKRREERRLQREHRDHQWPKEDGAAEGTVTEDYNSQVVRW) form a disordered region. The segment covering 423 to 454 (KQLEHQRDRQKRREERRLQREHRDHQWPKEDG) has biased composition (basic and acidic residues). Residues 462–471 (EDYNSQVVRW) show a composition bias toward polar residues.

This sequence belongs to the sulfotransferase 6 family.

It is found in the membrane. It carries out the reaction alpha-D-glucosaminyl-[heparan sulfate](n) + 3'-phosphoadenylyl sulfate = 6-sulfo-alpha-D-glucosaminyl-[heparan sulfate](n) + adenosine 3',5'-bisphosphate + H(+). 6-O-sulfation enzyme which catalyzes the transfer of sulfate from 3'-phosphoadenosine 5'-phosphosulfate (PAPS) to position 6 of the N-sulfoglucosamine residue (GlcNS) of heparan sulfate. The chain is Heparan-sulfate 6-O-sulfotransferase 3 (HS6ST3) from Homo sapiens (Human).